The chain runs to 226 residues: Uridylate kinase (226 aa).

An ATP-binding site is contributed by 9-10 (GS). Residue G46 participates in UMP binding. Residues G47 and R51 each coordinate ATP. UMP is bound by residues D68 and 116–122 (THPGHTT). Residues T142, N143, Y148, and D151 each contribute to the ATP site.

Belongs to the UMP kinase family. Homohexamer.

The protein localises to the cytoplasm. It catalyses the reaction UMP + ATP = UDP + ADP. It participates in pyrimidine metabolism; CTP biosynthesis via de novo pathway; UDP from UMP (UMPK route): step 1/1. Inhibited by UTP. Catalyzes the reversible phosphorylation of UMP to UDP. This is Uridylate kinase from Methanocaldococcus jannaschii (strain ATCC 43067 / DSM 2661 / JAL-1 / JCM 10045 / NBRC 100440) (Methanococcus jannaschii).